We begin with the raw amino-acid sequence, 222 residues long: MAVGDVKTAQGLNDLNQYLAEKSYVSGYTPSQADVQVFEQVGKAPAANLPHVLRWYNQIASYTSAERKTWSQGTSPLTAGAKPTAPAPAAKDDDDDDVDLFGSGDEEEDAEAERIREERLKAYADKKSKKPALIAKSSILLDVKPWDDETDMKEMENQVRTIEMEGLLWGASKLVPVGYGINKLQIMCVIEDDKVSVDLLTEKIQEFEDFVQSVDIAAFNKI.

The segment at 71–113 (SQGTSPLTAGAKPTAPAPAAKDDDDDDVDLFGSGDEEEDAEAE) is disordered. Over residues 78-89 (TAGAKPTAPAPA) the composition is skewed to low complexity. Residues 92–111 (DDDDDDVDLFGSGDEEEDAE) are compositionally biased toward acidic residues.

It belongs to the EF-1-beta/EF-1-delta family. In terms of assembly, EF-1 is composed of 4 subunits: alpha, beta, beta' and gamma. Post-translationally, phosphorylated.

Its function is as follows. EF-1-beta and EF-1-beta' stimulate the exchange of GDP bound to EF-1-alpha to GTP. This Bombyx mori (Silk moth) protein is Elongation factor 1-beta'.